Consider the following 871-residue polypeptide: Speckle targeted PIP5K1A-regulated poly(A) polymerase (871 aa).

The Matrin-type zinc-finger motif lies at 16–46; it reads FRCCLCHITTANQPSLDAHLGGRKHRHLVEL. In terms of domain architecture, RRM spans 56-128; sequence RSVFVSGFPR…RRLRVRPREQ (73 aa). Ser205 provides a ligand contact to ATP. The Mg(2+) site is built by Asp216 and Asp218. UTP is bound by residues Asp216 and Asp218. The tract at residues 252–321 is disordered; the sequence is QALACTPASP…QEDQGDGDQG (70 aa). Pro residues predominate over residues 259–269; the sequence is ASPPDSQPPAS. ATP is bound at residue Asn392. UTP is bound by residues Asn392, Arg414, Tyr432, and His547. The PAP-associated domain occupies 489-547; it reads LSSLLAQFFSCVSCWDLRGSLLSLREGQALSVAGGLPSNLSEGLRLGPMNLQDPFDLSH. The interval 596 to 871 is KA1; binds the bulging loops of U6 snRNA but is dispensable for terminal uridylyltransferase activity; the sequence is SSPSSILSAT…LPQALRNLLK (276 aa). The tract at residues 636-684 is disordered; it reads GTKRLRSEGGGPGEPPQGGTSKRAKLDGQKKSCEEGPEEQQGCAGEHGE. The segment covering 659 to 669 has biased composition (basic and acidic residues); sequence AKLDGQKKSCE. Ser748 bears the Phosphoserine mark.

The protein belongs to the DNA polymerase type-B-like family. In terms of assembly, associates with the cleavage and polyadenylation specificity factor (CPSF) complex. Interacts with CPSF1 and CPSF3; the interaction is direct. Interacts with PIP5K1A. Mg(2+) is required as a cofactor. Mn(2+) serves as cofactor. Phosphorylated by CK1 in the proline-rich (Pro-rich) region.

It is found in the nucleus. The protein resides in the nucleolus. It localises to the nucleus speckle. It carries out the reaction RNA(n) + UTP = RNA(n)-3'-uridine ribonucleotide + diphosphate. The catalysed reaction is RNA(n) + ATP = RNA(n)-3'-adenine ribonucleotide + diphosphate. Adenylyltransferase activity is specifically phosphatidylinositol 4,5-bisphosphate (PtdIns(4,5)P2). Poly(A) polymerase that creates the 3'-poly(A) tail of specific pre-mRNAs. Localizes to nuclear speckles together with PIP5K1A and mediates polyadenylation of a select set of mRNAs, such as HMOX1. In addition to polyadenylation, it is also required for the 3'-end cleavage of pre-mRNAs: binds to the 3'UTR of targeted pre-mRNAs and promotes the recruitment and assembly of the CPSF complex on the 3'UTR of pre-mRNAs. In addition to adenylyltransferase activity, also has uridylyltransferase activity. However, the ATP ratio is higher than UTP in cells, suggesting that it functions primarily as a poly(A) polymerase. Acts as a specific terminal uridylyltransferase for U6 snRNA in vitro: responsible for a controlled elongation reaction that results in the restoration of the four 3'-terminal UMP-residues found in newly transcribed U6 snRNA. Not involved in replication-dependent histone mRNA degradation. This chain is Speckle targeted PIP5K1A-regulated poly(A) polymerase (TUT1), found in Bos taurus (Bovine).